A 566-amino-acid polypeptide reads, in one-letter code: Proline--tRNA ligase (566 aa).

Belongs to the class-II aminoacyl-tRNA synthetase family. ProS type 1 subfamily. Homodimer.

Its subcellular location is the cytoplasm. The enzyme catalyses tRNA(Pro) + L-proline + ATP = L-prolyl-tRNA(Pro) + AMP + diphosphate. In terms of biological role, catalyzes the attachment of proline to tRNA(Pro) in a two-step reaction: proline is first activated by ATP to form Pro-AMP and then transferred to the acceptor end of tRNA(Pro). As ProRS can inadvertently accommodate and process non-cognate amino acids such as alanine and cysteine, to avoid such errors it has two additional distinct editing activities against alanine. One activity is designated as 'pretransfer' editing and involves the tRNA(Pro)-independent hydrolysis of activated Ala-AMP. The other activity is designated 'posttransfer' editing and involves deacylation of mischarged Ala-tRNA(Pro). The misacylated Cys-tRNA(Pro) is not edited by ProRS. This is Proline--tRNA ligase from Bacillus cereus (strain Q1).